A 153-amino-acid chain; its full sequence is Salivary C-type lectin 1 (153 aa).

The N-terminal stretch at 1–19 (MIFSLYLIVAISLADLTAA) is a signal peptide. In terms of domain architecture, C-type lectin spans 26-151 (KNRFCFPNVV…CSSTRRFVCE (126 aa)). 2 disulfide bridges follow: cysteine 45–cysteine 150 and cysteine 122–cysteine 142.

It depends on Ca(2+) as a cofactor. Expressed in female salivary gland. Not detected or low-level expression in female midgut and fat body.

It localises to the secreted. In terms of biological role, salivary protein with carbohydrate-binding activity; exibits high affinity for D-mannose. Agglutinates host erythrocytes. Probably participates in mosquito innate immune responses to prevent microorganism multiplication in sugar and blood meals. (Microbial infection) Agglutinates Staphylococcus aureus in vitro. Functionally, (Microbial infection) Agglutinates Candida albicans in vitro. Its function is as follows. (Microbial infection) Does not agglutinate Escherichia coli in vitro. The chain is Salivary C-type lectin 1 from Aedes albopictus (Asian tiger mosquito).